A 152-amino-acid polypeptide reads, in one-letter code: Probable prefoldin subunit 5 (152 aa).

Belongs to the prefoldin subunit alpha family. As to quaternary structure, heterohexamer of two PFD-alpha type and four PFD-beta type subunits.

Its function is as follows. Binds specifically to cytosolic chaperonin (c-CPN) and transfers target proteins to it. Binds to nascent polypeptide chain and promotes folding in an environment in which there are many competing pathways for nonnative proteins. In Caenorhabditis elegans, this protein is Probable prefoldin subunit 5 (pfd-5).